Here is a 368-residue protein sequence, read N- to C-terminus: Phospho-N-acetylmuramoyl-pentapeptide-transferase (368 aa).

The next 9 helical transmembrane spans lie at 30 to 50, 72 to 92, 98 to 118, 139 to 159, 170 to 190, 201 to 221, 238 to 258, 262 to 284, and 345 to 365; these read AAAITALLITVFAGPSFIRFL, VPTMGGLLIILAVEISALLWA, HVWLIMLAVLWMGLIGFIDDY, VALGLVVGFYTWNDPAFSVLL, FSVDYGIFYIPVVIFIITAVS, GLAAGNAAIVTMALGLFAYLG, AGEIAVVSMAIVMACVGFLWF, PAEVFMGDTGSLALGSAIAVIAL, and KIVIRFWIISILLFLTSLMTL.

This sequence belongs to the glycosyltransferase 4 family. MraY subfamily. Mg(2+) serves as cofactor.

Its subcellular location is the cell inner membrane. It catalyses the reaction UDP-N-acetyl-alpha-D-muramoyl-L-alanyl-gamma-D-glutamyl-meso-2,6-diaminopimeloyl-D-alanyl-D-alanine + di-trans,octa-cis-undecaprenyl phosphate = di-trans,octa-cis-undecaprenyl diphospho-N-acetyl-alpha-D-muramoyl-L-alanyl-D-glutamyl-meso-2,6-diaminopimeloyl-D-alanyl-D-alanine + UMP. It functions in the pathway cell wall biogenesis; peptidoglycan biosynthesis. In terms of biological role, catalyzes the initial step of the lipid cycle reactions in the biosynthesis of the cell wall peptidoglycan: transfers peptidoglycan precursor phospho-MurNAc-pentapeptide from UDP-MurNAc-pentapeptide onto the lipid carrier undecaprenyl phosphate, yielding undecaprenyl-pyrophosphoryl-MurNAc-pentapeptide, known as lipid I. The polypeptide is Phospho-N-acetylmuramoyl-pentapeptide-transferase (Chlorobaculum parvum (strain DSM 263 / NCIMB 8327) (Chlorobium vibrioforme subsp. thiosulfatophilum)).